The following is a 258-amino-acid chain: Probable F-box protein At2g29610 (258 aa).

Positions 1–25 are disordered; it reads MVELSEIPGDPNGADPNNNPQEEDE. The span at 8–20 shows a compositional bias: low complexity; the sequence is PGDPNGADPNNNP. One can recognise an F-box domain in the interval 28 to 74; that stretch reads LPILLQLPEELIERIIAHFPQCYSPSPILVCETFRQVINSDHFYYVT.

This is Probable F-box protein At2g29610 from Arabidopsis thaliana (Mouse-ear cress).